A 395-amino-acid polypeptide reads, in one-letter code: Calreticulin (395 aa).

Residues M1–A15 form the signal peptide. Residues C101 and C133 are joined by a disulfide bond. The an alpha-D-glucoside site is built by Y105, K107, Y124, and D131. 7 repeat units span residues A186–L197, D205–E216, D222–K233, D239–D250, G254–P264, G268–P278, and G282–P292. The segment at A186–D250 is 4 X approximate repeats. Residues E193–Y301 form a P-domain region. Residues K202–E212 are compositionally biased toward basic and acidic residues. The interval K202–E255 is disordered. Acidic residues predominate over residues D213 to E224. A compositionally biased stretch (basic and acidic residues) spans D225–E246. Positions G254–P292 are 3 X approximate repeats. The segment at S302 to L395 is C-domain. An alpha-D-glucoside is bound at residue D312. The span at E340–D380 shows a compositional bias: basic and acidic residues. Residues E340–L395 are disordered. Residues D381–L395 show a composition bias toward acidic residues. Positions H392–L395 match the Prevents secretion from ER motif.

Belongs to the calreticulin family. Cleaved by caspase ced-3 in vitro.

The protein resides in the endoplasmic reticulum lumen. Molecular calcium-binding chaperone promoting folding, oligomeric assembly and quality control in the endoplasmic reticulum (ER) via the calreticulin/calnexin cycle. This lectin may interact transiently with almost all of the monoglucosylated glycoproteins that are synthesized in the ER. Probably by controlling the folding of extracellular matrix protein unc-52/Perlecan, may play a role in the formation of fibrous organelles, a hemidesmosome-like structure attaching muscles to the epidermis. Protects dopaminergic neurons against oxidative stress-induced neurodegeneration. May play a role in protection against ER stress. Plays a role in modulating lifespan, acting by influencing ER calcium homeostasis. The protein is Calreticulin (crt-1) of Caenorhabditis elegans.